We begin with the raw amino-acid sequence, 217 residues long: tRNA (guanine-N(7)-)-methyltransferase (217 aa).

Positions 45, 70, 97, and 119 each coordinate S-adenosyl-L-methionine. Residue Asp-119 is part of the active site. Residue Lys-123 coordinates substrate. The segment at 125–130 (RHEKRR) is interaction with RNA. Substrate is bound by residues Asp-155 and 195–198 (TEYE).

It belongs to the class I-like SAM-binding methyltransferase superfamily. TrmB family.

It catalyses the reaction guanosine(46) in tRNA + S-adenosyl-L-methionine = N(7)-methylguanosine(46) in tRNA + S-adenosyl-L-homocysteine. The protein operates within tRNA modification; N(7)-methylguanine-tRNA biosynthesis. Functionally, catalyzes the formation of N(7)-methylguanine at position 46 (m7G46) in tRNA. In Lactobacillus helveticus (strain DPC 4571), this protein is tRNA (guanine-N(7)-)-methyltransferase.